The following is a 529-amino-acid chain: Bifunctional purine biosynthesis protein PurH (529 aa).

One can recognise an MGS-like domain in the interval 1–148; sequence MQQRRPVRRA…KNHKDVAIVV (148 aa). Lys287 is subject to N6-acetyllysine.

Belongs to the PurH family.

It catalyses the reaction (6R)-10-formyltetrahydrofolate + 5-amino-1-(5-phospho-beta-D-ribosyl)imidazole-4-carboxamide = 5-formamido-1-(5-phospho-D-ribosyl)imidazole-4-carboxamide + (6S)-5,6,7,8-tetrahydrofolate. The catalysed reaction is IMP + H2O = 5-formamido-1-(5-phospho-D-ribosyl)imidazole-4-carboxamide. Its pathway is purine metabolism; IMP biosynthesis via de novo pathway; 5-formamido-1-(5-phospho-D-ribosyl)imidazole-4-carboxamide from 5-amino-1-(5-phospho-D-ribosyl)imidazole-4-carboxamide (10-formyl THF route): step 1/1. The protein operates within purine metabolism; IMP biosynthesis via de novo pathway; IMP from 5-formamido-1-(5-phospho-D-ribosyl)imidazole-4-carboxamide: step 1/1. This Escherichia coli O45:K1 (strain S88 / ExPEC) protein is Bifunctional purine biosynthesis protein PurH.